Here is a 379-residue protein sequence, read N- to C-terminus: GTP cyclohydrolase 1 type 2 homolog (379 aa).

Positions 64, 65, 103, 333, and 337 each coordinate a divalent metal cation.

This sequence belongs to the GTP cyclohydrolase I type 2/NIF3 family. Homohexamer.

The sequence is that of GTP cyclohydrolase 1 type 2 homolog from Mycobacterium bovis (strain ATCC BAA-935 / AF2122/97).